A 718-amino-acid chain; its full sequence is DNA ligase (718 aa).

NAD(+)-binding positions include 44–48 (DADYD), 93–94 (SL), and Glu127. Lys129 functions as the N6-AMP-lysine intermediate in the catalytic mechanism. NAD(+) contacts are provided by Arg150, Glu186, Lys302, and Lys326. The Zn(2+) site is built by Cys432, Cys435, Cys456, and Cys462. Positions 640–718 (TAGSPVAGKT…EDEWLALISG (79 aa)) constitute a BRCT domain.

This sequence belongs to the NAD-dependent DNA ligase family. LigA subfamily. Mg(2+) serves as cofactor. Mn(2+) is required as a cofactor.

The enzyme catalyses NAD(+) + (deoxyribonucleotide)n-3'-hydroxyl + 5'-phospho-(deoxyribonucleotide)m = (deoxyribonucleotide)n+m + AMP + beta-nicotinamide D-nucleotide.. Its function is as follows. DNA ligase that catalyzes the formation of phosphodiester linkages between 5'-phosphoryl and 3'-hydroxyl groups in double-stranded DNA using NAD as a coenzyme and as the energy source for the reaction. It is essential for DNA replication and repair of damaged DNA. The chain is DNA ligase from Rhizobium etli (strain ATCC 51251 / DSM 11541 / JCM 21823 / NBRC 15573 / CFN 42).